A 264-amino-acid chain; its full sequence is 3-methyl-2-oxobutanoate hydroxymethyltransferase (264 aa).

Positions 45 and 84 each coordinate Mg(2+). Residues 45-46 (DS), aspartate 84, and lysine 112 each bind 3-methyl-2-oxobutanoate. Residue glutamate 114 participates in Mg(2+) binding. Glutamate 181 functions as the Proton acceptor in the catalytic mechanism.

This sequence belongs to the PanB family. Homodecamer; pentamer of dimers. The cofactor is Mg(2+).

The protein localises to the cytoplasm. The catalysed reaction is 3-methyl-2-oxobutanoate + (6R)-5,10-methylene-5,6,7,8-tetrahydrofolate + H2O = 2-dehydropantoate + (6S)-5,6,7,8-tetrahydrofolate. Its pathway is cofactor biosynthesis; (R)-pantothenate biosynthesis; (R)-pantoate from 3-methyl-2-oxobutanoate: step 1/2. In terms of biological role, catalyzes the reversible reaction in which hydroxymethyl group from 5,10-methylenetetrahydrofolate is transferred onto alpha-ketoisovalerate to form ketopantoate. The polypeptide is 3-methyl-2-oxobutanoate hydroxymethyltransferase (Vibrio campbellii (strain ATCC BAA-1116)).